The following is a 161-amino-acid chain: MDFRIGQGYDVHQLVPGRPLIIGGVTIPYERGLLGHSDADVLLHAITDALFGAAALGDIGRHFSDTDAAFKGADSRVLLRECAARVKAAGFTIQNVDSTVIAQAPKLAPHIDGMRANIAADLGLPLDRVNVKAKTNEKLGYLGRGDGIEAQAAALLVKEGA.

2 residues coordinate a divalent metal cation: D10 and H12. Residues 10–12 (DVH) and 36–37 (HS) each bind 4-CDP-2-C-methyl-D-erythritol 2-phosphate. H44 provides a ligand contact to a divalent metal cation. Residues 58-60 (DIG), 63-67 (FSDTD), and R144 contribute to the 4-CDP-2-C-methyl-D-erythritol 2-phosphate site.

It belongs to the IspF family. In terms of assembly, homotrimer. It depends on a divalent metal cation as a cofactor.

The enzyme catalyses 4-CDP-2-C-methyl-D-erythritol 2-phosphate = 2-C-methyl-D-erythritol 2,4-cyclic diphosphate + CMP. It participates in isoprenoid biosynthesis; isopentenyl diphosphate biosynthesis via DXP pathway; isopentenyl diphosphate from 1-deoxy-D-xylulose 5-phosphate: step 4/6. In terms of biological role, involved in the biosynthesis of isopentenyl diphosphate (IPP) and dimethylallyl diphosphate (DMAPP), two major building blocks of isoprenoid compounds. Catalyzes the conversion of 4-diphosphocytidyl-2-C-methyl-D-erythritol 2-phosphate (CDP-ME2P) to 2-C-methyl-D-erythritol 2,4-cyclodiphosphate (ME-CPP) with a corresponding release of cytidine 5-monophosphate (CMP). This is 2-C-methyl-D-erythritol 2,4-cyclodiphosphate synthase from Burkholderia ambifaria (strain ATCC BAA-244 / DSM 16087 / CCUG 44356 / LMG 19182 / AMMD) (Burkholderia cepacia (strain AMMD)).